The primary structure comprises 168 residues: Plastocyanin B, chloroplastic (168 aa).

Residues 1 to 69 constitute a chloroplast transit peptide; that stretch reads MAAVTSAAVS…SAMIASNAMA (69 aa). The 99-residue stretch at 70 to 168 folds into the Plastocyanin-like domain; that stretch reads VDVLLGADDG…AGMVGKVIVN (99 aa). Cu cation contacts are provided by His-106, Cys-153, His-156, and Met-161.

This sequence belongs to the plastocyanin family. It depends on Cu(2+) as a cofactor.

The protein localises to the plastid. It localises to the chloroplast thylakoid membrane. Its function is as follows. Participates in electron transfer between P700 and the cytochrome b6-f complex in photosystem I. The sequence is that of Plastocyanin B, chloroplastic (PETE) from Populus nigra (Lombardy poplar).